Here is a 230-residue protein sequence, read N- to C-terminus: Interleukin-22 receptor subunit alpha-2 (230 aa).

The first 20 residues, 1 to 20, serve as a signal peptide directing secretion; it reads MMPKHCLLGLLIILLSSATE. Fibronectin type-III domains are found at residues 29-128 and 129-230; these read TPQK…TKLD and PPVV…VHIP. 2 disulfides stabilise this stretch: Cys-77–Cys-85 and Cys-205–Cys-226.

The protein belongs to the type II cytokine receptor family. As to expression, highly expressed in lymph nodes and at lower levels in lung, spleen, and thymus. Not expressed in kidney, liver and heart.

The protein localises to the secreted. Receptor for IL22. Binds to IL22, prevents interaction with the functional IL-22R complex and blocks the activity of IL22 (in vitro). May play an important role as an IL22 antagonist in the regulation of inflammatory responses. In Mus musculus (Mouse), this protein is Interleukin-22 receptor subunit alpha-2 (Il22ra2).